Consider the following 520-residue polypeptide: GMP synthase [glutamine-hydrolyzing] (520 aa).

The 194-residue stretch at 9–202 (TVLIVDFGSQ…VHKIAGIKGD (194 aa)) folds into the Glutamine amidotransferase type-1 domain. The active-site Nucleophile is Cys86. Active-site residues include His176 and Glu178. One can recognise a GMPS ATP-PPase domain in the interval 203-395 (WTMSAYRAKA…LGLPESFIGR (193 aa)). 230–236 (SGGVDSS) is an ATP binding site.

Homodimer.

It catalyses the reaction XMP + L-glutamine + ATP + H2O = GMP + L-glutamate + AMP + diphosphate + 2 H(+). It participates in purine metabolism; GMP biosynthesis; GMP from XMP (L-Gln route): step 1/1. Its function is as follows. Catalyzes the synthesis of GMP from XMP. This Sinorhizobium fredii (strain NBRC 101917 / NGR234) protein is GMP synthase [glutamine-hydrolyzing].